Here is a 453-residue protein sequence, read N- to C-terminus: Cytochrome b-c1 complex subunit 2, mitochondrial (453 aa).

The transit peptide at 1–14 (MKLLTRAGSLSRFY) directs the protein to the mitochondrion. 3 positions are modified to N6-acetyllysine: lysine 66, lysine 199, and lysine 250.

Belongs to the peptidase M16 family. UQCRC2/QCR2 subfamily. Component of the ubiquinol-cytochrome c oxidoreductase (cytochrome b-c1 complex, complex III, CIII), a multisubunit enzyme composed of 11 subunits. The complex is composed of 3 respiratory subunits cytochrome b, cytochrome c1 and Rieske protein UQCRFS1, 2 core protein subunits UQCRC1/QCR1 and UQCRC2/QCR2, and 6 low-molecular weight protein subunits UQCRH/QCR6, UQCRB/QCR7, UQCRQ/QCR8, UQCR10/QCR9, UQCR11/QCR10 and subunit 9, the cleavage product of Rieske protein UQCRFS1. The complex exists as an obligatory dimer and forms supercomplexes (SCs) in the inner mitochondrial membrane with NADH-ubiquinone oxidoreductase (complex I, CI) and cytochrome c oxidase (complex IV, CIV), resulting in different assemblies (supercomplex SCI(1)III(2)IV(1) and megacomplex MCI(2)III(2)IV(2)). Interacts with RAB5IF. Interacts with STMP1.

Its subcellular location is the mitochondrion inner membrane. Its function is as follows. Component of the ubiquinol-cytochrome c oxidoreductase, a multisubunit transmembrane complex that is part of the mitochondrial electron transport chain which drives oxidative phosphorylation. The respiratory chain contains 3 multisubunit complexes succinate dehydrogenase (complex II, CII), ubiquinol-cytochrome c oxidoreductase (cytochrome b-c1 complex, complex III, CIII) and cytochrome c oxidase (complex IV, CIV), that cooperate to transfer electrons derived from NADH and succinate to molecular oxygen, creating an electrochemical gradient over the inner membrane that drives transmembrane transport and the ATP synthase. The cytochrome b-c1 complex catalyzes electron transfer from ubiquinol to cytochrome c, linking this redox reaction to translocation of protons across the mitochondrial inner membrane, with protons being carried across the membrane as hydrogens on the quinol. In the process called Q cycle, 2 protons are consumed from the matrix, 4 protons are released into the intermembrane space and 2 electrons are passed to cytochrome c. The 2 core subunits UQCRC1/QCR1 and UQCRC2/QCR2 are homologous to the 2 mitochondrial-processing peptidase (MPP) subunits beta-MPP and alpha-MPP respectively, and they seem to have preserved their MPP processing properties. May be involved in the in situ processing of UQCRFS1 into the mature Rieske protein and its mitochondrial targeting sequence (MTS)/subunit 9 when incorporated into complex III. This is Cytochrome b-c1 complex subunit 2, mitochondrial (UQCRC2) from Bos taurus (Bovine).